A 337-amino-acid chain; its full sequence is Tryptophan--tRNA ligase (337 aa).

Residues 11 to 13 (QPT) and 19 to 20 (GN) contribute to the ATP site. The short motif at 12 to 20 (PTGALHLGN) is the 'HIGH' region element. Residue D135 coordinates L-tryptophan. ATP is bound by residues 147-149 (GED), V191, and 200-204 (KMSKS). The 'KMSKS' region signature appears at 200–204 (KMSKS).

It belongs to the class-I aminoacyl-tRNA synthetase family. Homodimer.

It localises to the cytoplasm. It carries out the reaction tRNA(Trp) + L-tryptophan + ATP = L-tryptophyl-tRNA(Trp) + AMP + diphosphate + H(+). Catalyzes the attachment of tryptophan to tRNA(Trp). The chain is Tryptophan--tRNA ligase from Parasynechococcus marenigrum (strain WH8102).